The sequence spans 223 residues: Glutathione S-transferase 4 (223 aa).

Ala2 is modified (blocked amino end (Ala)). The GST N-terminal domain occupies 4–85; the sequence is PAVKVYGWAI…HVLRKHKPEL (82 aa). Glutathione-binding positions include Ser14, 43–44, 56–57, and 69–70; these read HR, KV, and ES. One can recognise a GST C-terminal domain in the interval 90–223; that stretch reads RLEQTAMVDV…VGAGAPKEQE (134 aa).

This sequence belongs to the GST superfamily. Phi family. Homodimer or heterodimer of GST-I and GST-IV (=GST-II). As to expression, seedling roots.

It catalyses the reaction RX + glutathione = an S-substituted glutathione + a halide anion + H(+). In terms of biological role, conjugation of reduced glutathione to a wide number of exogenous and endogenous hydrophobic electrophiles. Involved in the detoxification of certain herbicides. Most active with substrates possessing a chloroacetamide structure. Trans-cinnamic acid and 1-chloro-2,4-dinitrobenzene are not effective substrates. May play an important role in the benoxacor-mediated protection of maize from metolachlor injury. The sequence is that of Glutathione S-transferase 4 (GST4) from Zea mays (Maize).